A 239-amino-acid polypeptide reads, in one-letter code: Purine nucleoside phosphorylase DeoD-type (239 aa).

Histidine 5 is an a purine D-ribonucleoside binding site. Phosphate contacts are provided by residues glycine 21, arginine 25, arginine 44, and arginine 88–serine 91. Residues glutamate 180 to glutamate 182 and serine 204 to aspartate 205 contribute to the a purine D-ribonucleoside site. Aspartate 205 serves as the catalytic Proton donor.

Belongs to the PNP/UDP phosphorylase family. Homohexamer; trimer of homodimers.

The catalysed reaction is a purine D-ribonucleoside + phosphate = a purine nucleobase + alpha-D-ribose 1-phosphate. It catalyses the reaction a purine 2'-deoxy-D-ribonucleoside + phosphate = a purine nucleobase + 2-deoxy-alpha-D-ribose 1-phosphate. Catalyzes the reversible phosphorolytic breakdown of the N-glycosidic bond in the beta-(deoxy)ribonucleoside molecules, with the formation of the corresponding free purine bases and pentose-1-phosphate. This is Purine nucleoside phosphorylase DeoD-type from Klebsiella pneumoniae (strain 342).